The chain runs to 51 residues: Large ribosomal subunit protein bL33 (51 aa).

Belongs to the bacterial ribosomal protein bL33 family.

The polypeptide is Large ribosomal subunit protein bL33 (Alteromonas mediterranea (strain DSM 17117 / CIP 110805 / LMG 28347 / Deep ecotype)).